The sequence spans 554 residues: Dihydroxy-acid dehydratase (554 aa).

Position 78 (aspartate 78) interacts with Mg(2+). Position 119 (cysteine 119) interacts with [2Fe-2S] cluster. 2 residues coordinate Mg(2+): aspartate 120 and lysine 121. Lysine 121 bears the N6-carboxylysine mark. A [2Fe-2S] cluster-binding site is contributed by cysteine 191. A Mg(2+)-binding site is contributed by glutamate 444. The Proton acceptor role is filled by serine 470.

Belongs to the IlvD/Edd family. As to quaternary structure, homodimer. It depends on [2Fe-2S] cluster as a cofactor. Mg(2+) serves as cofactor.

The enzyme catalyses (2R)-2,3-dihydroxy-3-methylbutanoate = 3-methyl-2-oxobutanoate + H2O. The catalysed reaction is (2R,3R)-2,3-dihydroxy-3-methylpentanoate = (S)-3-methyl-2-oxopentanoate + H2O. The protein operates within amino-acid biosynthesis; L-isoleucine biosynthesis; L-isoleucine from 2-oxobutanoate: step 3/4. It participates in amino-acid biosynthesis; L-valine biosynthesis; L-valine from pyruvate: step 3/4. Functions in the biosynthesis of branched-chain amino acids. Catalyzes the dehydration of (2R,3R)-2,3-dihydroxy-3-methylpentanoate (2,3-dihydroxy-3-methylvalerate) into 2-oxo-3-methylpentanoate (2-oxo-3-methylvalerate) and of (2R)-2,3-dihydroxy-3-methylbutanoate (2,3-dihydroxyisovalerate) into 2-oxo-3-methylbutanoate (2-oxoisovalerate), the penultimate precursor to L-isoleucine and L-valine, respectively. The polypeptide is Dihydroxy-acid dehydratase (Nitratidesulfovibrio vulgaris (strain ATCC 29579 / DSM 644 / CCUG 34227 / NCIMB 8303 / VKM B-1760 / Hildenborough) (Desulfovibrio vulgaris)).